A 529-amino-acid chain; its full sequence is Bifunctional purine biosynthesis protein PurH (529 aa).

The 148-residue stretch at 1–148 folds into the MGS-like domain; the sequence is MQQHRPVRRA…KNHKDVAIVV (148 aa).

The protein belongs to the PurH family.

It catalyses the reaction (6R)-10-formyltetrahydrofolate + 5-amino-1-(5-phospho-beta-D-ribosyl)imidazole-4-carboxamide = 5-formamido-1-(5-phospho-D-ribosyl)imidazole-4-carboxamide + (6S)-5,6,7,8-tetrahydrofolate. It carries out the reaction IMP + H2O = 5-formamido-1-(5-phospho-D-ribosyl)imidazole-4-carboxamide. It functions in the pathway purine metabolism; IMP biosynthesis via de novo pathway; 5-formamido-1-(5-phospho-D-ribosyl)imidazole-4-carboxamide from 5-amino-1-(5-phospho-D-ribosyl)imidazole-4-carboxamide (10-formyl THF route): step 1/1. The protein operates within purine metabolism; IMP biosynthesis via de novo pathway; IMP from 5-formamido-1-(5-phospho-D-ribosyl)imidazole-4-carboxamide: step 1/1. The sequence is that of Bifunctional purine biosynthesis protein PurH from Erwinia tasmaniensis (strain DSM 17950 / CFBP 7177 / CIP 109463 / NCPPB 4357 / Et1/99).